The sequence spans 975 residues: MSAEREIPAEDSIKVVCRFRPLNDSEEKAGSKFVVKFPNNVEENCISIAGKVYLFDKVFKPNASQEKVYNEAAKSIVTDVLAGYNGTIFAYGQTSSGKTHTMEGVIGDSVKQGIIPRIVNDIFNHIYAMEVNLEFHIKVSYYEIYMDKIRDLLDVSKVNLSVHEDKNRVPYVKGATERFVSSPEDVFEVIEEGKSNRHIAVTNMNEHSSRSHSVFLINVKQENLENQKKLSGKLYLVDLAGSEKVSKTGAEGTVLDEAKNINKSLSALGNVISALADGNKTHIPYRDSKLTRILQESLGGNARTTIVICCSPASFNESETKSTLDFGRRAKTVKNVVCVNEELTAEEWKRRYEKEKEKNARLKGKVEKLEIELARWRAGETVKAEEQINMEDLMEASTPNLEVEAAQTAAAEAALAAQRTALANMSASVAVNEQARLATECERLYQQLDDKDEEINQQSQYAEQLKEQVMEQEELIANARREYETLQSEMARIQQENESAKEEVKEVLQALEELAVNYDQKSQEIDNKNKDIDALNEELQQKQSVFNAASTELQQLKDMSSHQKKRITEMLTNLLRDLGEVGQAIAPGESSIDLKMSALAGTDASKVEEDFTMARLFISKMKTEAKNIAQRCSNMETQQADSNKKISEYEKDLGEYRLLISQHEARMKSLQESMREAENKKRTLEEQIDSLREECAKLKAAEHVSAVNAEEKQRAEELRSMFDSQMDELREAHTRQVSELRDEIAAKQHEMDEMKDVHQKLLLAHQQMTADYEKVRQEDAEKSSELQNIILTNERREQARKDLKGLEDTVAKELQTLHNLRKLFVQDLQQRIRKNVVNEESEEDGGSLAQKQKISFLENNLDQLTKVHKQLVRDNADLRCELPKLEKRLRCTMERVKALETALKEAKEGAMRDRKRYQYEVDRIKEAVRQKHLGRRGPQAQIAKPIRSGQGAIAIRGGGAVGGPSPLAQVNPVNS.

The Kinesin motor domain occupies 12–333; the sequence is SIKVVCRFRP…LDFGRRAKTV (322 aa). 92-99 is a binding site for ATP; the sequence is GQTSSGKT. Residues 180–321 form a microtubule-binding region; that stretch reads VSSPEDVFEV…PASFNESETK (142 aa). Positions 335–931 form a coiled coil; it reads NVVCVNEELT…DRIKEAVRQK (597 aa). The interval 810–891 is necessary for associating with milt; it reads VAKELQTLHN…LPKLEKRLRC (82 aa). Residues 932–975 form a globular region; the sequence is HLGRRGPQAQIAKPIRSGQGAIAIRGGGAVGGPSPLAQVNPVNS.

The protein belongs to the TRAFAC class myosin-kinesin ATPase superfamily. Kinesin family. Kinesin subfamily. As to quaternary structure, oligomer composed of two heavy chains and two light chains.

The protein resides in the cytoplasm. Its subcellular location is the cytoskeleton. In terms of biological role, kinesin is a microtubule-associated force-producing protein that may play a role in organelle transport. Milt and Miro form an essential protein complex that links Khc to mitochondria for light chain-independent, anterograde transport of mitochondria. In Drosophila melanogaster (Fruit fly), this protein is Kinesin heavy chain (Khc).